Reading from the N-terminus, the 148-residue chain is Large ribosomal subunit protein uL13 (148 aa).

It belongs to the universal ribosomal protein uL13 family. Part of the 50S ribosomal subunit.

Its function is as follows. This protein is one of the early assembly proteins of the 50S ribosomal subunit, although it is not seen to bind rRNA by itself. It is important during the early stages of 50S assembly. This is Large ribosomal subunit protein uL13 from Ureaplasma urealyticum serovar 10 (strain ATCC 33699 / Western).